The following is a 609-amino-acid chain: Proteasome-associated ATPase (609 aa).

The interval 1–22 (MGESERSEAFNPPREAGMSSGD) is disordered. Positions 20–96 (SGDIAELEQL…LREEVDRLGQ (77 aa)) form a coiled coil. An ATP-binding site is contributed by 296-301 (GCGKTL). The interval 608 to 609 (YL) is docks into pockets in the proteasome alpha-ring.

Belongs to the AAA ATPase family. Homohexamer. Assembles into a hexameric ring structure that caps the 20S proteasome core. Strongly interacts with the prokaryotic ubiquitin-like protein Pup through a hydrophobic interface; the interacting region of ARC lies in its N-terminal coiled-coil domain. There is one Pup binding site per ARC hexamer ring. Upon ATP-binding, the C-terminus of ARC interacts with the alpha-rings of the proteasome core, possibly by binding to the intersubunit pockets.

The protein operates within protein degradation; proteasomal Pup-dependent pathway. ATPase which is responsible for recognizing, binding, unfolding and translocation of pupylated proteins into the bacterial 20S proteasome core particle. May be essential for opening the gate of the 20S proteasome via an interaction with its C-terminus, thereby allowing substrate entry and access to the site of proteolysis. Thus, the C-termini of the proteasomal ATPase may function like a 'key in a lock' to induce gate opening and therefore regulate proteolysis. In Mycobacterium leprae (strain Br4923), this protein is Proteasome-associated ATPase.